Consider the following 502-residue polypeptide: CBL-interacting serine/threonine-protein kinase 13 (502 aa).

The tract at residues 32-51 is disordered; sequence TNKETSTPESPRSPRTPQGS. Residues 35–48 are compositionally biased toward low complexity; it reads ETSTPESPRSPRTP. Residues 57-311 enclose the Protein kinase domain; it reads YEIGKLLGHG…IPEIMKHRWF (255 aa). Residues 63 to 71 and Lys86 contribute to the ATP site; that span reads LGHGSFAKV. The active-site Proton acceptor is Asp179. Residues 197-226 form an activation loop region; it reads DFGLSVVSEQLKQEGICQTFCGTPAYLAPE. Ser201 bears the Phosphoserine mark. Residue Thr215 is modified to Phosphothreonine. The interval 331 to 359 is disordered; sequence DDDNDDDDSSSLSSGRSSTASEGDAEFDI. Residues 340 to 352 show a composition bias toward low complexity; that stretch reads SSLSSGRSSTASE. Residues 366–387 form the NAF domain; it reads PRPASLNAFDILSFSDLSGLFE. The segment at 390 to 419 is PPI; it reads GQGARFVSAAPMTKIISKLEEIAKEVKFMV.

The protein belongs to the protein kinase superfamily. CAMK Ser/Thr protein kinase family. SNF1 subfamily. In terms of assembly, interacts with CBL2 and CBL3. Requires Mn(2+) as cofactor.

The enzyme catalyses L-seryl-[protein] + ATP = O-phospho-L-seryl-[protein] + ADP + H(+). The catalysed reaction is L-threonyl-[protein] + ATP = O-phospho-L-threonyl-[protein] + ADP + H(+). Its function is as follows. CIPK serine-threonine protein kinases interact with CBL proteins. Binding of a CBL protein to the regulatory NAF domain of CIPK protein lead to the activation of the kinase in a calcium-dependent manner. This is CBL-interacting serine/threonine-protein kinase 13 (CIPK13) from Arabidopsis thaliana (Mouse-ear cress).